Here is a 248-residue protein sequence, read N- to C-terminus: Acetylglutamate kinase (248 aa).

Residues 36 to 37 (GG), arginine 58, and asparagine 147 each bind substrate.

Belongs to the acetylglutamate kinase family. ArgB subfamily.

It localises to the cytoplasm. It catalyses the reaction N-acetyl-L-glutamate + ATP = N-acetyl-L-glutamyl 5-phosphate + ADP. It functions in the pathway amino-acid biosynthesis; L-arginine biosynthesis; N(2)-acetyl-L-ornithine from L-glutamate: step 2/4. Functionally, catalyzes the ATP-dependent phosphorylation of N-acetyl-L-glutamate. This chain is Acetylglutamate kinase, found in Thermus thermophilus (strain ATCC BAA-163 / DSM 7039 / HB27).